Consider the following 369-residue polypeptide: 3-dehydroquinate synthase (369 aa).

NAD(+)-binding positions include 110 to 114, 134 to 135, Lys147, Lys156, and 174 to 177; these read GVIGD, TT, and TLKT. Glu189, His254, and His271 together coordinate Zn(2+).

Belongs to the sugar phosphate cyclases superfamily. Dehydroquinate synthase family. The cofactor is Co(2+). Requires Zn(2+) as cofactor. NAD(+) serves as cofactor.

It is found in the cytoplasm. It carries out the reaction 7-phospho-2-dehydro-3-deoxy-D-arabino-heptonate = 3-dehydroquinate + phosphate. It functions in the pathway metabolic intermediate biosynthesis; chorismate biosynthesis; chorismate from D-erythrose 4-phosphate and phosphoenolpyruvate: step 2/7. Catalyzes the conversion of 3-deoxy-D-arabino-heptulosonate 7-phosphate (DAHP) to dehydroquinate (DHQ). This chain is 3-dehydroquinate synthase, found in Cyanothece sp. (strain PCC 7425 / ATCC 29141).